A 66-amino-acid chain; its full sequence is U-scoloptoxin(24)-Er2a (66 aa).

A signal peptide spans 1–23; it reads MVKPLHCLIGIVLFLAVLNAGNG. A disordered region spans residues 43-66; sequence SLFHGNQRKKRSEEKRFSDMEQTK. Over residues 53–66 the composition is skewed to basic and acidic residues; that stretch reads RSEEKRFSDMEQTK.

It belongs to the scoloptoxin-24 family. Expressed by the venom gland.

Its subcellular location is the secreted. The protein is U-scoloptoxin(24)-Er2a of Ethmostigmus rubripes (Giant centipede).